Consider the following 379-residue polypeptide: Chaperone protein DnaJ (379 aa).

One can recognise a J domain in the interval 7-72 (CYYETLEVDR…DKRAAYDRYG (66 aa)). The segment at 135–213 (GKTAQIEIPV…CSGAGRIERE (79 aa)) adopts a CR-type zinc-finger fold. Residues Cys-148, Cys-151, Cys-165, Cys-168, Cys-187, Cys-190, Cys-201, and Cys-204 each contribute to the Zn(2+) site. CXXCXGXG motif repeat units lie at residues 148-155 (CESCSGTG), 165-172 (CSMCGGAG), 187-194 (CPGCQGRG), and 201-208 (CPACSGAG).

The protein belongs to the DnaJ family. In terms of assembly, homodimer. It depends on Zn(2+) as a cofactor.

It is found in the cytoplasm. Functionally, participates actively in the response to hyperosmotic and heat shock by preventing the aggregation of stress-denatured proteins and by disaggregating proteins, also in an autonomous, DnaK-independent fashion. Unfolded proteins bind initially to DnaJ; upon interaction with the DnaJ-bound protein, DnaK hydrolyzes its bound ATP, resulting in the formation of a stable complex. GrpE releases ADP from DnaK; ATP binding to DnaK triggers the release of the substrate protein, thus completing the reaction cycle. Several rounds of ATP-dependent interactions between DnaJ, DnaK and GrpE are required for fully efficient folding. Also involved, together with DnaK and GrpE, in the DNA replication of plasmids through activation of initiation proteins. This Rhodopseudomonas palustris (strain BisB18) protein is Chaperone protein DnaJ.